An 84-amino-acid polypeptide reads, in one-letter code: MSINENTMEFDIQKNKDDLTRSILSEVNNSLKEKGYNPINQLVGYLISGDPTYITNYNGARALIRKLERDEILEEVLKAYLSIK.

This sequence belongs to the UPF0297 family.

In Clostridium novyi (strain NT), this protein is UPF0297 protein NT01CX_2279.